Consider the following 382-residue polypeptide: Queuine tRNA-ribosyltransferase (382 aa).

The active-site Proton acceptor is aspartate 94. Substrate is bound by residues 94–98 (DSGGF), aspartate 148, glutamine 192, and glycine 219. Residues 250-256 (GVGKPED) form an RNA binding region. Aspartate 269 serves as the catalytic Nucleophile. The segment at 274-278 (TRNAR) is RNA binding; important for wobble base 34 recognition. Zn(2+)-binding residues include cysteine 307, cysteine 309, cysteine 312, and histidine 338.

It belongs to the queuine tRNA-ribosyltransferase family. Homodimer. Within each dimer, one monomer is responsible for RNA recognition and catalysis, while the other monomer binds to the replacement base PreQ1. The cofactor is Zn(2+).

The catalysed reaction is 7-aminomethyl-7-carbaguanine + guanosine(34) in tRNA = 7-aminomethyl-7-carbaguanosine(34) in tRNA + guanine. The protein operates within tRNA modification; tRNA-queuosine biosynthesis. Its function is as follows. Catalyzes the base-exchange of a guanine (G) residue with the queuine precursor 7-aminomethyl-7-deazaguanine (PreQ1) at position 34 (anticodon wobble position) in tRNAs with GU(N) anticodons (tRNA-Asp, -Asn, -His and -Tyr). Catalysis occurs through a double-displacement mechanism. The nucleophile active site attacks the C1' of nucleotide 34 to detach the guanine base from the RNA, forming a covalent enzyme-RNA intermediate. The proton acceptor active site deprotonates the incoming PreQ1, allowing a nucleophilic attack on the C1' of the ribose to form the product. After dissociation, two additional enzymatic reactions on the tRNA convert PreQ1 to queuine (Q), resulting in the hypermodified nucleoside queuosine (7-(((4,5-cis-dihydroxy-2-cyclopenten-1-yl)amino)methyl)-7-deazaguanosine). The sequence is that of Queuine tRNA-ribosyltransferase from Haemophilus ducreyi (strain 35000HP / ATCC 700724).